The following is a 385-amino-acid chain: MKIDAVKKLLMIPGPTMVPPEVLNAMALPVIGHRTKDYSNLLEDTIEKLKKVFITENDTFLITGSGTAAMDMAISNIIKRGDKVLNIVTGNFGERFANIVKAYKGEAIRLDVEWGDMAEPEAVKEILDKYDDIKAVTVVHNETSTGARNPIKEIGEVVKDYDALYIVDTVSSLGGDYVNVDKFHIDICVTGSQKCLAAPPGLAAITVSEKAWEVIKKNDDKVGFYLDLLAYKKYYEEKKQTPYTPSVNLTYALNVALDLVLEEGIENRVKRHERLAKATRAGLEAMGIELFAKERARSVTVTSAKYPEGIEDSKFRGILSNKYNIVVAGGQKHLAGKIFRIGHMGICGEKEVLATLACVELALKELGFEVKESGVEVAKEVLLKE.

Lys-194 is modified (N6-(pyridoxal phosphate)lysine).

This sequence belongs to the class-V pyridoxal-phosphate-dependent aminotransferase family. Requires pyridoxal 5'-phosphate as cofactor.

This is an uncharacterized protein from Methanocaldococcus jannaschii (strain ATCC 43067 / DSM 2661 / JAL-1 / JCM 10045 / NBRC 100440) (Methanococcus jannaschii).